Reading from the N-terminus, the 157-residue chain is Glutaredoxin-2, mitochondrial (157 aa).

The transit peptide at 1–19 (MSWYRAASVGRRLVASGRI) directs the protein to the mitochondrion. One can recognise a Glutaredoxin domain in the interval 50 to 150 (VNQIQETISN…PLVHQCYLNK (101 aa)). C61 contacts [2Fe-2S] cluster. K67 is a binding site for glutathione. Position 70 is an S-glutathionyl cysteine; alternate (C70). C70 and C73 are joined by a disulfide. Glutathione is bound by residues Q102 and V114. Residue C146 coordinates [2Fe-2S] cluster.

This sequence belongs to the glutaredoxin family. Monomer; active form. Homodimer; inactive form. The homodimer is probably linked by 1 2Fe-2S cluster.

It localises to the mitochondrion. The protein localises to the nucleus. The 2Fe-2S present in the homodimer leads to inactivation of the enzyme. The 2Fe-2S may serve as a redox sensor: the presence of one-electron oxidants or reductants leading to the loss of the 2Fe-2S cluster, subsequent monomerization and activation of the enzyme. Its function is as follows. Glutathione-dependent oxidoreductase that facilitates the maintenance of mitochondrial redox homeostasis upon induction of apoptosis by oxidative stress. Involved in response to hydrogen peroxide and regulation of apoptosis caused by oxidative stress. Acts as a very efficient catalyst of monothiol reactions because of its high affinity for protein glutathione-mixed disulfides. Can receive electrons not only from glutathione (GSH), but also from thioredoxin reductase supporting both monothiol and dithiol reactions. Efficiently catalyzes both glutathionylation and deglutathionylation of mitochondrial complex I, which in turn regulates the superoxide production by the complex. Overexpression decreases the susceptibility to apoptosis and prevents loss of cardiolipin and cytochrome c release. This chain is Glutaredoxin-2, mitochondrial (Glrx2), found in Rattus norvegicus (Rat).